The chain runs to 81 residues: Photosystem I iron-sulfur center (81 aa).

4Fe-4S ferredoxin-type domains are found at residues 2 to 31 (AHSV…MVPW) and 39 to 68 (IASA…VRVY). Positions 11, 14, 17, 21, 48, 51, 54, and 58 each coordinate [4Fe-4S] cluster.

In terms of assembly, the eukaryotic PSI reaction center is composed of at least 11 subunits. [4Fe-4S] cluster serves as cofactor.

The protein resides in the plastid. It is found in the chloroplast thylakoid membrane. The catalysed reaction is reduced [plastocyanin] + hnu + oxidized [2Fe-2S]-[ferredoxin] = oxidized [plastocyanin] + reduced [2Fe-2S]-[ferredoxin]. In terms of biological role, apoprotein for the two 4Fe-4S centers FA and FB of photosystem I (PSI); essential for photochemical activity. FB is the terminal electron acceptor of PSI, donating electrons to ferredoxin. The C-terminus interacts with PsaA/B/D and helps assemble the protein into the PSI complex. Required for binding of PsaD and PsaE to PSI. PSI is a plastocyanin/cytochrome c6-ferredoxin oxidoreductase, converting photonic excitation into a charge separation, which transfers an electron from the donor P700 chlorophyll pair to the spectroscopically characterized acceptors A0, A1, FX, FA and FB in turn. The sequence is that of Photosystem I iron-sulfur center from Pyropia yezoensis (Susabi-nori).